A 132-amino-acid polypeptide reads, in one-letter code: Protein C10 (132 aa).

Residue alanine 2 is modified to N-acetylalanine.

Belongs to the UPF0456 family.

Its subcellular location is the cytoplasm. Its function is as follows. In brain, may be required for corpus callosum development. In Bos taurus (Bovine), this protein is Protein C10.